A 151-amino-acid polypeptide reads, in one-letter code: Pseudo histidine-containing phosphotransfer protein 2 (151 aa).

Residues 38–133 form the HPt domain; it reads SPNFVEEVAA…ATLKQKLESY (96 aa).

Its function is as follows. Functions as a two-component phosphorelay mediator between cytokinin sensor histidine kinases and response regulators (B-type ARRs). Plays an important role in propagating cytokinin signal transduction. This chain is Pseudo histidine-containing phosphotransfer protein 2, found in Oryza sativa subsp. japonica (Rice).